The sequence spans 61 residues: Inner membrane protein p12 (61 aa).

A helical membrane pass occupies residues 16-36 (LLIVAIIVVIMAIMLYYFWWM).

It belongs to the asfivirus inner membrane protein p12 family. In terms of assembly, homomultimer; disulfide-linked. Post-translationally, not glycosylated.

It localises to the virion membrane. The chain is Inner membrane protein p12 from Ornithodoros (relapsing fever ticks).